Consider the following 128-residue polypeptide: Fluoride-specific ion channel FluC (128 aa).

4 consecutive transmembrane segments (helical) span residues 8-28 (IIFI…LGLL), 38-58 (LGTL…LAFF), 71-91 (FFVT…AEVI), and 103-123 (LMLA…GVFI). Na(+) is bound by residues glycine 78 and threonine 81.

The protein belongs to the fluoride channel Fluc/FEX (TC 1.A.43) family.

The protein localises to the cell inner membrane. The catalysed reaction is fluoride(in) = fluoride(out). Na(+) is not transported, but it plays an essential structural role and its presence is essential for fluoride channel function. Functionally, fluoride-specific ion channel. Important for reducing fluoride concentration in the cell, thus reducing its toxicity. The chain is Fluoride-specific ion channel FluC from Pasteurella multocida (strain Pm70).